A 169-amino-acid polypeptide reads, in one-letter code: Ribosome maturation factor RimP (169 aa).

The protein belongs to the RimP family.

It localises to the cytoplasm. Functionally, required for maturation of 30S ribosomal subunits. The chain is Ribosome maturation factor RimP from Streptomyces avermitilis (strain ATCC 31267 / DSM 46492 / JCM 5070 / NBRC 14893 / NCIMB 12804 / NRRL 8165 / MA-4680).